The sequence spans 101 residues: Small ribosomal subunit protein uS14 (101 aa).

This sequence belongs to the universal ribosomal protein uS14 family. In terms of assembly, part of the 30S ribosomal subunit. Contacts proteins S3 and S10.

Functionally, binds 16S rRNA, required for the assembly of 30S particles and may also be responsible for determining the conformation of the 16S rRNA at the A site. This Chlamydia pneumoniae (Chlamydophila pneumoniae) protein is Small ribosomal subunit protein uS14.